A 185-amino-acid polypeptide reads, in one-letter code: Ribosome-recycling factor (185 aa).

Belongs to the RRF family.

The protein resides in the cytoplasm. Its function is as follows. Responsible for the release of ribosomes from messenger RNA at the termination of protein biosynthesis. May increase the efficiency of translation by recycling ribosomes from one round of translation to another. This Pseudomonas entomophila (strain L48) protein is Ribosome-recycling factor.